Here is a 488-residue protein sequence, read N- to C-terminus: Altronate oxidoreductase (488 aa).

18–29 is a binding site for NAD(+); the sequence is VIQFGEGNFLRA.

Belongs to the mannitol dehydrogenase family. UxaB subfamily.

It catalyses the reaction D-altronate + NAD(+) = keto-D-tagaturonate + NADH + H(+). It functions in the pathway carbohydrate metabolism; pentose and glucuronate interconversion. The polypeptide is Altronate oxidoreductase (Pectobacterium atrosepticum (strain SCRI 1043 / ATCC BAA-672) (Erwinia carotovora subsp. atroseptica)).